The chain runs to 184 residues: Cytosolic Prostaglandin E synthase (184 aa).

One can recognise a CS domain in the interval 7–96 (LIPPPVSWAQ…AAGPYWSSLT (90 aa)). A disordered region spans residues 115-184 (ESDDEEGDQK…EGDKEKKPAA (70 aa)). Phosphoserine is present on residues Ser116, Ser127, Ser135, Ser156, and Ser162. The span at 147–158 (FNVDDEEEDSDD) shows a compositional bias: acidic residues. The span at 175–184 (EGDKEKKPAA) shows a compositional bias: basic and acidic residues.

This sequence belongs to the p23/wos2 family.

Its subcellular location is the cytoplasm. It carries out the reaction prostaglandin H2 = prostaglandin E2. Functionally, cytosolic prostaglandin synthase that catalyzes the oxidoreduction of prostaglandin endoperoxide H2 (PGH2) to prostaglandin E2 (PGE2). Through production of PGE2 may regulate the activity of non-muscle myosin II in an autocrine or paracrine fashion; this may influence border cell and nurse cell stiffness to facilitate border cell migration during oogenesis. The protein is Cytosolic Prostaglandin E synthase of Drosophila melanogaster (Fruit fly).